Consider the following 420-residue polypeptide: MARGAAELTQTRKVMIKEQLANLTALIDLRIADTPCNGLDDDMPMQPAIDNTITHELAKETYALLHAIKGPSLSVFNFGEQVMHVSAVRALFGLGVFSALPQDRQAMTATALAEKLGCDEELLVRLMRMCTIWGPFKEVGTETYSHTQFSLAYLDPQVTNQFQAFVDEFLPACLQLHKFLEINNGKPPVDATNCPYTLAHQTSGKDMWEHLAQFPKRSKVVNSAMYAISSAHPWPVALYPFREALLQLPPTSSNAPLVIDIGGGQGQAISVIRKMCGGINGRFILEDRPEVLAGIPHTLRGIEKIECDLFKPQPVKGAAIYFLRHVLHDWAEDACVRILQNIASAITDKSTQRVVISEMVLPEKGVTAECATQDLVTLSTTGAERSRKQWERLIPAAGFRVENIYSSEASCEAAIECYLE.

S-adenosyl-L-methionine contacts are provided by residues 262 to 263 (GG), D287, and 308 to 309 (DL). H328 functions as the Proton acceptor in the catalytic mechanism.

The protein belongs to the class I-like SAM-binding methyltransferase superfamily. Cation-independent O-methyltransferase family.

Its pathway is secondary metabolite biosynthesis. O-methyltransferase; part of the gene cluster that mediates the biosynthesis of oxepinamides, derivatives of anthranilyl-containing tripeptides that share an oxepin ring and a fused pyrimidinone moiety. The nonribosomal peptide synthetase (NRPS) opaA assembles the quinazolinone core with D-Phe incorporation. The first adenylation domain (A1) of opaA loads and activates anthranilic acid whereas the second A domain (A2) is for activating of L-Phe, which is then converted to D-form by the E domain. The third A domain (A3) is responsible for L-Ile activation and the terminal condensation domain C3 for cyclization and releasing the NRPS product protuboxepin K. The cytochrome P450 monooxygenase opaB then catalyzes alone the oxepin ring formation to convert protuboxepin K into protuboxepin A. The flavoenzyme opaC installs subsequently one hydroxyl group at the oxepin ring, accompanied by double bond migration, to form 15-epi-oxepinamide E. The epimerase opaE changes the D-Phe residue back to L-form, leading to oxepinamide E, which is further methylated at the hydroxyl group at C-12 by the O-methyltransferase OpaF to yield oxepinamide F. This Aspergillus ustus protein is O-methyltransferase opaF.